The following is a 246-amino-acid chain: Phosducin (246 aa).

Positions 1–14 are enriched in acidic residues; sequence MEEAASQSLEEDFE. The tract at residues 1-70 is disordered; the sequence is MEEAASQSLE…DKDSKERMSR (70 aa). The region spanning 1-246 is the Phosducin domain; sequence MEEAASQSLE…QTNTEDEDIE (246 aa). The span at 58–69 shows a compositional bias: basic and acidic residues; sequence SRDDKDSKERMS. Ser-73 is modified (phosphoserine; by PKA). Residues 111–246 are thioredoxin fold; it reads YGFVYELETG…QTNTEDEDIE (136 aa).

This sequence belongs to the phosducin family. In terms of assembly, interacts with CRX. Forms a complex with the beta and gamma subunits of the GTP-binding protein, transducin. Post-translationally, light-induced changes in cyclic nucleotide levels modulate the phosphorylation of this protein by cAMP kinase.

It localises to the cytoplasm. It is found in the cytosol. The protein localises to the nucleus. The protein resides in the cell projection. Its subcellular location is the cilium. It localises to the photoreceptor outer segment. It is found in the photoreceptor inner segment. Functionally, inhibits the transcriptional activation activity of the cone-rod homeobox CRX. May participate in the regulation of visual phototransduction or in the integration of photoreceptor metabolism. The protein is Phosducin (Pdc) of Rattus norvegicus (Rat).